The primary structure comprises 110 residues: Large ribosomal subunit protein uL22 (110 aa).

The protein belongs to the universal ribosomal protein uL22 family. Part of the 50S ribosomal subunit.

Its function is as follows. This protein binds specifically to 23S rRNA; its binding is stimulated by other ribosomal proteins, e.g. L4, L17, and L20. It is important during the early stages of 50S assembly. It makes multiple contacts with different domains of the 23S rRNA in the assembled 50S subunit and ribosome. Functionally, the globular domain of the protein is located near the polypeptide exit tunnel on the outside of the subunit, while an extended beta-hairpin is found that lines the wall of the exit tunnel in the center of the 70S ribosome. This Mycoplasma mobile (strain ATCC 43663 / 163K / NCTC 11711) (Mesomycoplasma mobile) protein is Large ribosomal subunit protein uL22.